Consider the following 138-residue polypeptide: Glutathione S-transferase Mu 5 (138 aa).

Residue Ser-1 is modified to Phosphoserine. A GST N-terminal domain is found at 1–71 (SMVLGYWDIR…KITQSNAILR (71 aa)). Glutathione-binding positions include 6-7 (YW), 39-43 (WLDVK), 52-53 (NL), and 65-66 (QS). Residues 72–135 (IRVDIMENQI…FMCRCFKMPI (64 aa)) enclose the GST C-terminal domain.

The protein belongs to the GST superfamily. Mu family. Homodimer.

It is found in the cytoplasm. It catalyses the reaction RX + glutathione = an S-substituted glutathione + a halide anion + H(+). In terms of biological role, conjugation of reduced glutathione to a wide number of exogenous and endogenous hydrophobic electrophiles. This is Glutathione S-transferase Mu 5 from Mesocricetus auratus (Golden hamster).